A 495-amino-acid chain; its full sequence is 3-octaprenyl-4-hydroxybenzoate carboxy-lyase (495 aa).

Residue asparagine 171 participates in Mn(2+) binding. Prenylated FMN is bound by residues 174–176, 188–190, and 193–194; these read IYR, RWL, and RG. Glutamate 237 contacts Mn(2+). Aspartate 286 acts as the Proton donor in catalysis.

This sequence belongs to the UbiD family. In terms of assembly, homohexamer. Requires prenylated FMN as cofactor. Mn(2+) serves as cofactor.

The protein localises to the cell membrane. It carries out the reaction a 4-hydroxy-3-(all-trans-polyprenyl)benzoate + H(+) = a 2-(all-trans-polyprenyl)phenol + CO2. It functions in the pathway cofactor biosynthesis; ubiquinone biosynthesis. In terms of biological role, catalyzes the decarboxylation of 3-octaprenyl-4-hydroxy benzoate to 2-octaprenylphenol, an intermediate step in ubiquinone biosynthesis. This Hamiltonella defensa subsp. Acyrthosiphon pisum (strain 5AT) protein is 3-octaprenyl-4-hydroxybenzoate carboxy-lyase.